The sequence spans 355 residues: Elongation factor Ts (355 aa).

Positions 82-85 (TDFV) are involved in Mg(2+) ion dislocation from EF-Tu.

This sequence belongs to the EF-Ts family.

The protein resides in the cytoplasm. In terms of biological role, associates with the EF-Tu.GDP complex and induces the exchange of GDP to GTP. It remains bound to the aminoacyl-tRNA.EF-Tu.GTP complex up to the GTP hydrolysis stage on the ribosome. This Helicobacter hepaticus (strain ATCC 51449 / 3B1) protein is Elongation factor Ts.